Reading from the N-terminus, the 291-residue chain is U7 snRNA-associated Sm-like protein LSm11 (291 aa).

A disordered region spans residues 55 to 84 (ARGRARGAQRGQSRGPGGKRKGRKPEPDPE). The 76-residue stretch at 124-199 (SPLGELNRCV…LTLTRLFDRL (76 aa)) folds into the Sm domain. Positions 155-289 (GFIVAFDKFW…RGENVLLVHI (135 aa)) are SM. The interval 203–266 (EPGSHDPAKG…RRNRKEKVDY (64 aa)) is disordered. Positions 251 to 261 (NRPKQRRRNRK) are enriched in basic residues.

It belongs to the snRNP Sm proteins family. As to quaternary structure, component of the heptameric ring U7 snRNP complex.

The protein localises to the nucleus. In terms of biological role, component of the U7 snRNP complex that is involved in the histone 3'-end pre-mRNA processing. Increases U7 snRNA levels but not histone 3'-end pre-mRNA processing activity, when overexpressed. Binds specifically to the Sm-binding site of U7 snRNA. The polypeptide is U7 snRNA-associated Sm-like protein LSm11 (Xenopus laevis (African clawed frog)).